Consider the following 491-residue polypeptide: ADP-specific phosphofructokinase (491 aa).

One can recognise an ADPK domain in the interval 4-486 (EEWEQRHAEA…FVAMLAKIKQ (483 aa)). Mg(2+) contacts are provided by Glu-281, Glu-312, and Asp-470. Asp-470 (proton acceptor) is an active-site residue.

It belongs to the carbohydrate kinase PfkC family. The cofactor is Mg(2+).

It localises to the cytoplasm. It catalyses the reaction beta-D-fructose 6-phosphate + ADP = beta-D-fructose 1,6-bisphosphate + AMP + H(+). It functions in the pathway carbohydrate degradation; glycolysis. Catalyzes the phosphorylation of fructose 6-phosphate to fructose 1,6-bisphosphate using ADP as the phosphate donor. This Methanosarcina acetivorans (strain ATCC 35395 / DSM 2834 / JCM 12185 / C2A) protein is ADP-specific phosphofructokinase.